Consider the following 552-residue polypeptide: DNA ligase (552 aa).

Glutamate 229 contributes to the ATP binding site. Catalysis depends on lysine 231, which acts as the N6-AMP-lysine intermediate. ATP is bound by residues arginine 236 and glutamate 283. Mg(2+) contacts are provided by glutamate 283 and glutamate 377. ATP contacts are provided by lysine 382 and lysine 397.

The protein belongs to the ATP-dependent DNA ligase family. As to quaternary structure, interacts with host TOP2A and TOP2B. It depends on Mg(2+) as a cofactor.

The protein localises to the host cytoplasm. It catalyses the reaction ATP + (deoxyribonucleotide)n-3'-hydroxyl + 5'-phospho-(deoxyribonucleotide)m = (deoxyribonucleotide)n+m + AMP + diphosphate.. In terms of biological role, DNA ligase that seals nicks in double-stranded DNA during DNA replication, DNA recombination and DNA repair. Recruits cellular topoisomerase II to sites of viral replication and assembly. This chain is DNA ligase (OPG180), found in Homo sapiens (Human).